A 136-amino-acid polypeptide reads, in one-letter code: MSLLNILNIAGSAMSAQSEKINVIASNLANAESIVCKDGKFYPYIAKKVIFKLDPLKNSLIGGVKVFSIINDLNPMKLIYDPSNPLSNKNGYVLQTNVNPVSETINHISASRSYQANVEVLKTAKSMIMKTLSIGE.

Belongs to the flagella basal body rod proteins family. In terms of assembly, the basal body constitutes a major portion of the flagellar organelle and consists of four rings (L,P,S, and M) mounted on a central rod. The rod consists of about 26 subunits of FlgG in the distal portion, and FlgB, FlgC and FlgF are thought to build up the proximal portion of the rod with about 6 subunits each.

Its subcellular location is the bacterial flagellum basal body. The chain is Flagellar basal-body rod protein FlgC (flgC) from Buchnera aphidicola subsp. Schizaphis graminum (strain Sg).